Here is a 448-residue protein sequence, read N- to C-terminus: tRNA-2-methylthio-N(6)-dimethylallyladenosine synthase (448 aa).

An MTTase N-terminal domain is found at 3–120 (KKLFIKTHGC…LPTMLDSRQG (118 aa)). [4Fe-4S] cluster is bound by residues C12, C49, C83, C158, C162, and C165. The region spanning 144–376 (TSDGATAFVS…QERLNQQTMQ (233 aa)) is the Radical SAM core domain. One can recognise a TRAM domain in the interval 379 to 444 (RRMVGNTERI…PNSLRGDLAS (66 aa)).

It belongs to the methylthiotransferase family. MiaB subfamily. As to quaternary structure, monomer. The cofactor is [4Fe-4S] cluster.

The protein localises to the cytoplasm. It carries out the reaction N(6)-dimethylallyladenosine(37) in tRNA + (sulfur carrier)-SH + AH2 + 2 S-adenosyl-L-methionine = 2-methylsulfanyl-N(6)-dimethylallyladenosine(37) in tRNA + (sulfur carrier)-H + 5'-deoxyadenosine + L-methionine + A + S-adenosyl-L-homocysteine + 2 H(+). In terms of biological role, catalyzes the methylthiolation of N6-(dimethylallyl)adenosine (i(6)A), leading to the formation of 2-methylthio-N6-(dimethylallyl)adenosine (ms(2)i(6)A) at position 37 in tRNAs that read codons beginning with uridine. In Chromohalobacter salexigens (strain ATCC BAA-138 / DSM 3043 / CIP 106854 / NCIMB 13768 / 1H11), this protein is tRNA-2-methylthio-N(6)-dimethylallyladenosine synthase.